The sequence spans 218 residues: Serine/threonine-protein phosphatase 2 (218 aa).

Positions 22, 24, 51, and 77 each coordinate Mn(2+). Histidine 78 acts as the Proton donor in catalysis. Position 187 (histidine 187) interacts with Mn(2+).

This sequence belongs to the PPP phosphatase family. PP-1 subfamily. Requires Mn(2+) as cofactor.

The enzyme catalyses O-phospho-L-seryl-[protein] + H2O = L-seryl-[protein] + phosphate. It carries out the reaction O-phospho-L-threonyl-[protein] + H2O = L-threonyl-[protein] + phosphate. Its activity is regulated as follows. Inhibited by cadmium, copper, zinc when added activity but with less efficiency. Its function is as follows. Can hydrolyze phosphorylated Ser-, Thr- or Tyr-substrates in vitro. The natural substrate is unknown. The chain is Serine/threonine-protein phosphatase 2 (pphB) from Salmonella typhimurium (strain LT2 / SGSC1412 / ATCC 700720).